The primary structure comprises 179 residues: IIQRSRFLAKAAPAASEEEALAFLAAHREPQATHNAYAYRIGPLYRFSDDGEPRAPGRPILHAIEAAGLDRVVVLVVRYFGGVKLGAGGLVRAYGGVAAEALRRAPKAPLLDWVEVAFRVPFPEVGRVHGLLRARHLEAEEAYLPEGVRFALRLPPGGEGGPCLKALSDLTRGRLWVEG.

Belongs to the IMPACT family.

The protein is IMPACT family member in pol 5'region of Thermus thermophilus.